Reading from the N-terminus, the 76-residue chain is cAMP-dependent protein kinase inhibitor alpha (76 aa).

Threonine 2 carries the blocked amino end (Thr) modification. The disordered stretch occupies residues 49 to 76; that stretch reads KAEGEGDAQRNPSEQTGEAQGEAAKQES.

It belongs to the PKI family.

Functionally, extremely potent competitive inhibitor of cAMP-dependent protein kinase activity, this protein interacts with the catalytic subunit of the enzyme after the cAMP-induced dissociation of its regulatory chains. The protein is cAMP-dependent protein kinase inhibitor alpha (PKIA) of Gallus gallus (Chicken).